Here is a 100-residue protein sequence, read N- to C-terminus: Small ribosomal subunit protein uS14m (100 aa).

This sequence belongs to the universal ribosomal protein uS14 family.

The protein resides in the mitochondrion. This is Small ribosomal subunit protein uS14m (RPS14) from Vicia faba (Broad bean).